Here is a 449-residue protein sequence, read N- to C-terminus: Keratin, type I cuticular Ha7 (449 aa).

Residues 1–104 (MTSFYSTSSC…YGKNTLNGHE (104 aa)) form a head region. An IF rod domain is found at 104–415 (EKETMKFLND…NLLESEDCKL (312 aa)). The segment at 105–139 (KETMKFLNDRLANYLEKVRQLEQENAELETTLLER) is coil 1A. A linker 1 region spans residues 140 to 150 (SKCHESTVCPD). The segment at 151-251 (YQSYFRTIEE…HEQEVKILRS (101 aa)) is coil 1B. The segment at 252 to 267 (QLGEKFRIELDIEPTI) is linker 12. The interval 268 to 411 (DLNRVLGEMR…ATYRNLLESE (144 aa)) is coil 2. The interval 416–449 (PCNPCSTPASCTSCPSCGPVTGGSPSGHGASMGR) is tail.

It belongs to the intermediate filament family.

This is Keratin, type I cuticular Ha7 (KRT37) from Homo sapiens (Human).